Here is a 594-residue protein sequence, read N- to C-terminus: RING finger protein 207 (594 aa).

An RING-type zinc finger spans residues 25–64 (CPLCHAQYERPCLLDCFHDFCAGCLRGRTADGRVACPLCQ). Residues 93–145 (VEAVHCANCDLDCSKQDAETACFCNTCGQPLCARCRDETHRARMFARHDIVAL) form a B box-type; atypical zinc finger. Zn(2+)-binding residues include Cys-98, Cys-101, Cys-127, and His-132. A disordered region spans residues 369–400 (NTLAGGSGPKVLMGPSCPSPVRKVSRSPVQKP). Positions 424–458 (CRHYEDSYRGLQAEVQNLKDQVQELHRDLTKHHSL) form a coiled coil. The tract at residues 552 to 594 (FQASADDESENPQTAYDASRNGETPASLLLPGSVASAEPPFVN) is disordered. Over residues 562–575 (NPQTAYDASRNGET) the composition is skewed to polar residues.

In terms of assembly, interacts with the core-glycosylated, but not the fully glycosylated form of KCNH2/HERG. Interacts with DNAJA1 and HSPA8. Interacts (via the C-terminus) with HSPA1A; this interaction additively increases KCNH2 expression.

It localises to the cytoplasm. In terms of biological role, plays a role in cardiac repolarization possibly by stabilizing membrane expression of the potassium channel KCNH2/HERG, or by assisting its synthesis, folding or export from the endoplasmic reticulum, in a heat shock protein-dependent manner. This chain is RING finger protein 207 (RNF207), found in Oryctolagus cuniculus (Rabbit).